We begin with the raw amino-acid sequence, 784 residues long: LPS-assembly protein LptD (784 aa).

The signal sequence occupies residues 1–24; it reads MKKRIPTLLATMIATALYSQQGLA. Disulfide bonds link C31-C724 and C173-C725.

This sequence belongs to the LptD family. Component of the lipopolysaccharide transport and assembly complex. Interacts with LptE and LptA. In terms of processing, contains two intramolecular disulfide bonds.

It localises to the cell outer membrane. Functionally, together with LptE, is involved in the assembly of lipopolysaccharide (LPS) at the surface of the outer membrane. The polypeptide is LPS-assembly protein LptD (Shigella sonnei (strain Ss046)).